The primary structure comprises 680 residues: Nodulation protein NolNO (680 aa).

The protein belongs to the NodU/CmcH family.

It localises to the cytoplasm. Its function is as follows. Involved in the O-carbamoylation of nod factors. In Sinorhizobium fredii (strain NBRC 101917 / NGR234), this protein is Nodulation protein NolNO (nolO).